Reading from the N-terminus, the 232-residue chain is Acetate--CoA ligase [ADP-forming] I subunit beta (232 aa).

Positions 27-63 constitute an ATP-grasp domain; the sequence is KEILKLYGIPVPEFKVARNEEEAVKFSGEIGYPVVMK. 53 to 64 is a binding site for ATP; it reads SGEIGYPVVMKI.

The protein belongs to the acetate CoA ligase beta subunit family. Heterotetramer of two alpha and two beta subunits.

The protein localises to the cytoplasm. It carries out the reaction acetate + ATP + CoA = acetyl-CoA + ADP + phosphate. With respect to regulation, activity is dependent on magnesium. Functionally, catalyzes the reversible formation of acetate and ATP from acetyl-CoA by using ADP and phosphate. Can use other substrates such as isobutyryl-CoA, propionyl-CoA and butyryl-CoA, but not indoleacetyl-CoA, phenylacetyl-CoA or succinyl-CoA. Seems to be involved primarily in the conversion of acetyl-CoA to acetate. Participates in the degradation of branched-chain amino acids via branched-chain-acyl-CoA esters. In Pyrococcus furiosus (strain ATCC 43587 / DSM 3638 / JCM 8422 / Vc1), this protein is Acetate--CoA ligase [ADP-forming] I subunit beta.